We begin with the raw amino-acid sequence, 2912 residues long: Fibrillin-2 (2912 aa).

Residues 1–28 (MGRRRRLCLQLYFLWLGCVVLWAQGTAG) form the signal peptide. The disordered stretch occupies residues 27–52 (AGQPQPPPPKPPRPQPPPQQVRSATA). The propeptide occupies 29–77 (QPQPPPPKPPRPQPPPQQVRSATAGSEGGFLAPEYREEGAAVASRVRRR). Residues 30–45 (PQPPPPKPPRPQPPPQ) show a composition bias toward pro residues. EGF-like domains are found at residues 111-142 (IVPI…STCG), 145-176 (SIQQ…TYCG), and 176-208 (GQPV…PQCE). 9 disulfide bridges follow: C115-C124, C119-C130, C132-C141, C149-C159, C153-C164, C166-C175, C180-C190, C184-C196, and C198-C207. Residues 149–359 (CSVRCMNGGT…VTSTDGSRCI (211 aa)) form an interaction with MFAP4 region. Residues 214 to 266 (GPCFTQVNNQMCQGQLTGIVCTKTLCCATIGRAWGHPCEMCPAQPQPCRRGFI) enclose the TB 1 domain. The 42-residue stretch at 276–317 (DVDECQAIPGICQGGNCINTVGSFECRCPAGHKQSETTQKCE) folds into the EGF-like 4; calcium-binding domain. 6 disulfides stabilise this stretch: C280–C292, C287–C301, C303–C316, C322–C334, C329–C343, and C345–C358. S298 carries O-linked (Glc) serine glycosylation. The region spanning 318–359 (DIDECSIIPGICETGECSNTVGSYFCVCPRGYVTSTDGSRCI) is the EGF-like 5; calcium-binding domain. An O-linked (Glc) serine glycan is attached at S340. A TB 2 domain is found at 364-417 (GMCFSGLVNGRCAQELPGRMTKMQCCCEPGRCWGIGTIPEACPVRGSEEYRRLC). N-linked (GlcNAc...) asparagine glycosylation is present at N492. Residues 494-534 (TIDICKHHANLCLNGRCIPTVSSYRCECNMGYKQDANGDCI) form the EGF-like 6 domain. 15 disulfides stabilise this stretch: C498-C510, C505-C519, C521-C533, C539-C549, C544-C558, C560-C573, C579-C591, C586-C600, C602-C615, C621-C632, C627-C641, C643-C656, C662-C673, C668-C682, and C684-C697. A glycan (O-linked (Glc) serine) is linked at S516. In terms of domain architecture, EGF-like 7; calcium-binding spans 535–574 (DVDECTSNPCTNGDCVNTPGSYYCKCHAGFQRTPTKQACI). O-linked (Glc) serine glycosylation occurs at S555. The EGF-like 8; calcium-binding domain maps to 575–616 (DIDECIQNGVLCKNGRCVNTDGSFQCICNAGFELTTDGKNCV). S597 carries an O-linked (Glc) serine glycan. The 41-residue stretch at 617–657 (DHDECTTTNMCLNGMCINEDGSFKCICKPGFVLAPNGRYCT) folds into the EGF-like 9; calcium-binding domain. S638 carries O-linked (Glc) serine glycosylation. One can recognise an EGF-like 10; calcium-binding domain in the interval 658–698 (DVDECQTPGICMNGHCINSEGSFRCDCPPGLAVGMDGRVCV). A glycan (O-linked (Glc) serine) is linked at S679. Positions 704–756 (STCYGGIKKGVCVRPFPGAVTKSECCCANPDYGFGEPCQPCPAKNSAEFHGLC) constitute a TB 3 domain. The EGF-like 11; calcium-binding domain maps to 768–809 (DINECALDPDICANGICENLRGSYRCNCNSGYEPDASGRNCI). Disulfide bonds link C772–C784, C779–C793, C795–C808, C814–C826, C821–C835, C837–C850, C856–C866, C861–C875, and C877–C890. The EGF-like 12; calcium-binding domain maps to 810–851 (DIDECLVNRLLCDNGLCRNTPGSYSCTCPPGYVFRTETETCE). Residue S832 is glycosylated (O-linked (Glc) serine). Residues 852-891 (DINECESNPCVNGACRNNLGSFNCECSPGSKLSSTGLICI) enclose the EGF-like 13; calcium-binding domain. S872 carries O-linked (Glc) serine glycosylation. Residues 896 to 947 (GTCWLNIQDSRCEVNINGATLKSECCATLGAAWGSPCERCELDTACPRGLAR) enclose the TB 4 domain. One can recognise an EGF-like 14; calcium-binding domain in the interval 955–996 (DVNECEVFPGVCPNGRCVNSKGSFHCECPEGLTLDGTGRVCL). 3 disulfide bridges follow: C959–C971, C966–C980, and C982–C995. A glycan (O-linked (Glc) serine) is linked at S977. The TB 5 domain maps to 1001–1052 (EQCYLKWDEDECIHPVPGKFRMDACCCAVGAAWGTECEECPKPGTKEYETLC). The region spanning 1073–1114 (DINECKAFPGMCTYGKCRNTIGSFKCRCNSGFALDMEERNCT) is the EGF-like 15; calcium-binding domain. 36 disulfides stabilise this stretch: C1077–C1089, C1084–C1098, C1100–C1113, C1119–C1131, C1126–C1140, C1142–C1156, C1162–C1174, C1169–C1183, C1185–C1198, C1204–C1216, C1211–C1225, C1227–C1240, C1246–C1257, C1253–C1266, C1268–C1281, C1287–C1299, C1294–C1308, C1310–C1323, C1329–C1341, C1336–C1350, C1352–C1365, C1371–C1384, C1378–C1393, C1395–C1406, C1412–C1425, C1419–C1434, C1436–C1447, C1453–C1465, C1460–C1474, C1476–C1489, C1495–C1506, C1501–C1515, C1517–C1530, C1536–C1547, C1542–C1556, and C1558–C1571. S1095 is a glycosylation site (O-linked (Glc) serine). N1112 carries an N-linked (GlcNAc...) asparagine glycan. The region spanning 1115-1157 (DIDECRISPDLCGSGICVNTPGSFECECFEGYESGFMMMKNCM) is the EGF-like 16; calcium-binding domain. Residues 1158–1199 (DIDECERNPLLCRGGTCVNTEGSFQCDCPLGHELSPSREDCV) enclose the EGF-like 17; calcium-binding domain. O-linked (Glc) serine glycosylation occurs at S1180. Positions 1200-1241 (DINECSLSDNLCRNGKCVNMIGTYQCSCNPGYQATPDRQGCT) constitute an EGF-like 18; calcium-binding domain. T1222 carries an O-linked (Glc) threonine glycan. Residues 1242 to 1282 (DIDECMIMNGGCDTQCTNSEGSYECSCSEGYALMPDGRSCA) enclose the EGF-like 19; calcium-binding domain. A glycan (O-linked (Glc) serine) is linked at S1263. In terms of domain architecture, EGF-like 20; calcium-binding spans 1283 to 1324 (DIDECENNPDICDGGQCTNIPGEYRCLCYDGFMASMDMKTCI). The EGF-like 21; calcium-binding domain occupies 1325 to 1366 (DVNECDLNSNICMFGECENTKGSFICHCQLGYSVKKGTTGCT). The O-linked (Glc) serine glycan is linked to S1347. One can recognise an EGF-like 22; calcium-binding domain in the interval 1367–1407 (DVDECEIGAHNCDMHASCLNIPGSFKCSCREGWIGNGIKCI). An O-linked (Glc) serine glycan is attached at S1390. The EGF-like 23; calcium-binding domain occupies 1408-1448 (DLDECSNGTHQCSINAQCVNTPGSYRCACSEGFTGDGFTCS). N-linked (GlcNAc...) asparagine glycosylation occurs at N1414. Residues 1449–1490 (DVDECAENINLCENGQCLNVPGAYRCECEMGFTPASDSRSCQ) form the EGF-like 24; calcium-binding domain. Residues 1491-1531 (DIDECSFQNICVFGTCNNLPGMFHCICDDGYELDRTGGNCT) enclose the EGF-like 25; calcium-binding domain. N-linked (GlcNAc...) asparagine glycosylation occurs at N1529. The region spanning 1532-1572 (DIDECADPINCVNGLCVNTPGRYECNCPPDFQLNPTGVGCV) is the EGF-like 26; calcium-binding domain. One can recognise a TB 6 domain in the interval 1577–1633 (GNCYLKFGPRGDGSLSCNTEIGVGVSRSSCCCSLGKAWGNPCETCPPVNSTEYYTLC). Residue N1625 is glycosylated (N-linked (GlcNAc...) asparagine). The 42-residue stretch at 1650 to 1691 (DIDECQELPGLCQGGNCINTFGSFQCECPQGYYLSEDTRICE) folds into the EGF-like 27; calcium-binding domain. Intrachain disulfides connect C1654–C1666, C1661–C1675, C1677–C1690, C1696–C1708, C1703–C1717, and C1719–C1732. S1672 is a glycosylation site (O-linked (Glc) serine). The EGF-like 28; calcium-binding domain maps to 1692–1733 (DIDECFAHPGVCGPGTCYNTLGNYTCICPPEYMQVNGGHNCM). N1714 carries N-linked (GlcNAc...) asparagine glycosylation. The segment at 1735–2171 (MRKSFCYRSY…VPSLHDTRED (437 aa)) is interaction with MFAP4. Positions 1738 to 1791 (SFCYRSYNGTTCENELPFNVTKRMCCCTYNVGKAWNKPCEPCPTPGTADFKTIC) constitute a TB 7 domain. N-linked (GlcNAc...) asparagine glycans are attached at residues N1745 and N1756. The EGF-like 29; calcium-binding domain maps to 1808 to 1849 (DIDECKEIPGICANGVCINQIGSFRCECPTGFSYNDLLLVCE). Disulfide bonds link C1812/C1824, C1819/C1833, C1835/C1848, C1854/C1867, C1861/C1876, C1878/C1890, C1896/C1908, C1903/C1917, C1919/C1932, C1938/C1948, C1943/C1957, C1959/C1971, C1977/C1990, C1985/C1999, C2001/C2014, C2020/C2032, C2027/C2041, C2043/C2054, C2060/C2072, C2067/C2081, and C2083/C2096. The EGF-like 30; calcium-binding domain occupies 1850-1891 (DIDECSNGDNLCQRNADCINSPGSYRCECAAGFKLSPNGACV). O-linked (Glc) serine glycosylation is present at S1873. The region spanning 1892-1933 (DRNECLEIPNVCSHGLCVDLQGSYQCICHNGFKASQDQTMCM) is the EGF-like 31; calcium-binding domain. The 39-residue stretch at 1934 to 1972 (DVDECERHPCGNGTCKNTVGSYNCLCYPGFELTHNNDCL) folds into the EGF-like 32; calcium-binding domain. N1945 carries N-linked (GlcNAc...) asparagine glycosylation. S1954 is a glycosylation site (O-linked (Glc) serine). Positions 1973–2015 (DIDECSSFFGQVCRNGRCFNEIGSFKCLCNEGYELTPDGKNCI) constitute an EGF-like 33; calcium-binding domain. O-linked (Glc) serine glycosylation is present at S1996. The EGF-like 34; calcium-binding domain maps to 2016 to 2055 (DTNECVALPGSCSPGTCQNLEGSFRCICPPGYEVKSENCI). In terms of domain architecture, EGF-like 35; calcium-binding spans 2056-2097 (DINECDEDPNICLFGSCTNTPGGFQCLCPPGFVLSDNGRRCF). A TB 8 domain is found at 2102–2155 (SFCFTNFENGKCSVPKAFNTTKAKCCCSKMPGEGWGDPCELCPKDDEVAFQDLC). N2120 is a glycosylation site (N-linked (GlcNAc...) asparagine). Residues 2171 to 2212 (DVNECLESPGICSNGQCINTDGSFRCECPMGYNLDYTGVRCV) enclose the EGF-like 36; calcium-binding domain. 15 cysteine pairs are disulfide-bonded: C2175-C2187, C2182-C2196, C2198-C2211, C2217-C2228, C2223-C2237, C2239-C2251, C2257-C2268, C2264-C2277, C2279-C2292, C2298-C2312, C2305-C2321, C2323-C2336, C2342-C2354, C2349-C2363, and C2365-C2378. The O-linked (Glc) serine glycan is linked to S2193. Positions 2213 to 2252 (DTDECSIGNPCGNGTCTNVIGSFECNCNEGFEPGPMMNCE) constitute an EGF-like 37; calcium-binding domain. N-linked (GlcNAc...) asparagine glycosylation is present at N2225. One can recognise an EGF-like 38; calcium-binding domain in the interval 2253–2293 (DINECAQNPLLCAFRCMNTFGSYECTCPIGYALREDQKMCK). S2274 carries an O-linked (Glc) serine glycan. An EGF-like 39; calcium-binding domain is found at 2294-2337 (DLDECAEGLHDCESRGMMCKNLIGTFMCICPPGMARRPDGEGCV). Residues 2338–2379 (DENECRTKPGICENGRCVNIIGSYRCECNEGFQSSSSGTECL) form the EGF-like 40; calcium-binding domain. S2360 carries an O-linked (Glc) serine glycan. The 54-residue stretch at 2384 to 2437 (GLCFAEVLQTICQMASSSRNLVTKSECCCDGGRGWGHQCELCPLPGTAQYKKIC) folds into the TB 9 domain. The 42-residue stretch at 2449-2490 (DIDECKVMPNLCTNGQCINTMGSFRCFCKVGYTTDISGTSCI) folds into the EGF-like 41; calcium-binding domain. 21 cysteine pairs are disulfide-bonded: C2453–C2465, C2460–C2474, C2476–C2489, C2495–C2506, C2502–C2515, C2517–C2530, C2536–C2547, C2543–C2556, C2558–C2569, C2575–C2588, C2582–C2597, C2599–C2612, C2618–C2628, C2624–C2637, C2639–C2652, C2658–C2669, C2664–C2678, C2680–C2693, C2699–C2710, C2706–C2719, and C2721–C2733. S2471 is a glycosylation site (O-linked (Glc) serine). The 41-residue stretch at 2491 to 2531 (DLDECSQSPKPCNYICKNTEGSYQCSCPRGYVLQEDGKTCK) folds into the EGF-like 42; calcium-binding domain. An O-linked (Glc) serine glycan is attached at S2512. The 39-residue stretch at 2532–2570 (DLDECQTKQHNCQFLCVNTLGGFTCKCPPGFTQHHTACI) folds into the EGF-like 43; calcium-binding domain. In terms of domain architecture, EGF-like 44; calcium-binding spans 2571–2613 (DNNECGSQPSLCGAKGICQNTPGSFSCECQRGFSLDATGLNCE). O-linked (Glc) serine glycosylation is present at S2594. In terms of domain architecture, EGF-like 45; calcium-binding spans 2614–2653 (DVDECDGNHRCQHGCQNILGGYRCGCPQGYIQHYQWNQCV). The EGF-like 46; calcium-binding domain maps to 2654-2694 (DENECSNPNACGSASCYNTLGSYKCACPSGFSFDQFSSACH). Residue S2675 is glycosylated (O-linked (Glc) serine). One can recognise an EGF-like 47; calcium-binding domain in the interval 2695 to 2734 (DVNECSSSKNPCNYGCSNTEGGYLCGCPPGYYRVGQGHCV). N2808 is a glycosylation site (N-linked (GlcNAc...) asparagine).

The protein belongs to the fibrillin family. In terms of assembly, interacts with BMP2, BMP4, BMP7, BMP10 and GDF5. Interacts with MFAP2 and MFAP5. Interacts with ADAMTSL5. Interacts with MFAP4. N-glycosylated. Post-translationally, O-glycosylated on serine residues by POGLUT2 and POGLUT3. As to expression, almost exclusively expressed in placenta. Expressed at much lower level in other tissues. Expressed in fetal eye (18 weeks)in the retinal pigment epithelium (RPE), the choroid, Bruch's membrane and in the sclera. Not expressed in the neural retina. In terms of tissue distribution, present at high level in cytotrophoblasts as compared with syncytiotrophoblasts at 8-9 weeks of pregnancy (at protein level). Levels in the serum increase during pregnancy (at protein level).

It is found in the secreted. It localises to the extracellular space. Its subcellular location is the extracellular matrix. Functionally, fibrillins are structural components of 10-12 nm extracellular calcium-binding microfibrils, which occur either in association with elastin or in elastin-free bundles. Fibrillin-2-containing microfibrils regulate the early process of elastic fiber assembly. Regulates osteoblast maturation by controlling TGF-beta bioavailability and calibrating TGF-beta and BMP levels, respectively. Its function is as follows. Hormone secreted by trophoblasts that promotes trophoblast invasiveness. Has glucogenic activity: is able to increase plasma glucose levels. The chain is Fibrillin-2 from Homo sapiens (Human).